The chain runs to 398 residues: Phosphoglycerate kinase (398 aa).

Substrate-binding positions include 23–25, Arg38, 61–64, Arg122, and Arg155; these read DFN and HMGK. Residues Lys206, Gly297, Glu328, and 354 to 357 each bind ATP; that span reads GGDS.

This sequence belongs to the phosphoglycerate kinase family. As to quaternary structure, monomer.

Its subcellular location is the cytoplasm. It carries out the reaction (2R)-3-phosphoglycerate + ATP = (2R)-3-phospho-glyceroyl phosphate + ADP. The protein operates within carbohydrate degradation; glycolysis; pyruvate from D-glyceraldehyde 3-phosphate: step 2/5. The chain is Phosphoglycerate kinase from Clostridium botulinum (strain Loch Maree / Type A3).